The following is a 147-amino-acid chain: Myoglobin (147 aa).

The region spanning 2–141 (ADFDMVLKCW…IIADMEADYK (140 aa)) is the Globin domain. A nitrite-binding site is contributed by H60. H60 contacts O2. Position 89 (H89) interacts with heme b.

This sequence belongs to the globin family. As to quaternary structure, monomeric.

The protein localises to the cytoplasm. It is found in the sarcoplasm. The catalysed reaction is Fe(III)-heme b-[protein] + nitric oxide + H2O = Fe(II)-heme b-[protein] + nitrite + 2 H(+). It carries out the reaction H2O2 + AH2 = A + 2 H2O. In terms of biological role, monomeric heme protein which primary function is to store oxygen and facilitate its diffusion within muscle tissues. Reversibly binds oxygen through a pentacoordinated heme iron and enables its timely and efficient release as needed during periods of heightened demand. Depending on the oxidative conditions of tissues and cells, and in addition to its ability to bind oxygen, it also has a nitrite reductase activity whereby it regulates the production of bioactive nitric oxide. Under stress conditions, like hypoxia and anoxia, it also protects cells against reactive oxygen species thanks to its pseudoperoxidase activity. This Pseudochaenichthys georgianus (South Georgia icefish) protein is Myoglobin (mb).